Reading from the N-terminus, the 782-residue chain is Chaoptin (782 aa).

LRR repeat units lie at residues 16–37 (SLLTLKLTHALSSSVQNFPSDA), 43–64 (RLEELDLSNNRLRNVPDNSFHF), 67–88 (SLKKVHLQDNTIEMIHRGTFQG), 93–114 (DLTEVYFSFNSVRNVQQHTFAD), 117–138 (QLEQIHLDDNRIESLERRAFMN), 141–162 (SLKRLNLKGNKIATIAYETFQN), 165–186 (ELEDLDLAYNSISSLDFNIFDQ), 191–212 (GMFHVNMSHNKLINLVVAPSVP), 224–245 (NIKVLDLSFNNITSVAKQFFRP), 249–270 (SLMQLYLGHNKLLNATKDLFGN), 273–294 (HLQVLDLSHNSLYELDFDTFRN), 297–318 (KLQWLDTSHNRISEIPNDLFRF), 321–342 (NLRIVDFSHNRLRSLPDNLFRE), 344–364 (GLERLDVSHNLLGKLPLTSLS), 370–391 (TLSELDLSWNSISSLSHGGQLA), 395–416 (CLSWLDLSYNRLGQIDAGTFKG), 419–442 (RLASLNLGHNSQLTLEINGLSFQG), 446–467 (TLLHLNLDNVSLSQVPALSTPN), 468–488 (LLSLSLAFNSLPTVALEVAGN), 491–512 (SLRYLNLDYNDLSAVPIVTHSL), 514–535 (ELRHLSLEGNPITTLSNTSLLG), and 539–560 (QLEELNLKNIDLTVLESGAFCK). Asn-196, Asn-234, and Asn-262 each carry an N-linked (GlcNAc...) asparagine glycan. Residues Asn-454 and Asn-488 are each glycosylated (N-linked (GlcNAc...) asparagine). The N-linked (GlcNAc...) asparagine glycan is linked to Asn-530. Asn-618, Asn-648, and Asn-667 each carry an N-linked (GlcNAc...) asparagine glycan.

Belongs to the chaoptin family.

It is found in the cell membrane. Required for photoreceptor cell morphogenesis. Mediates homophilic cellular adhesion. The chain is Chaoptin (CHP) from Tribolium castaneum (Red flour beetle).